We begin with the raw amino-acid sequence, 365 residues long: Putative DNA-directed RNA polymerase subunit alpha-like 3 (365 aa).

It belongs to the RNA polymerase alpha chain family. As to quaternary structure, in plastids the minimal PEP RNA polymerase catalytic core is composed of four subunits: alpha, beta, beta', and beta''. When a (nuclear-encoded) sigma factor is associated with the core the holoenzyme is formed, which can initiate transcription.

Its subcellular location is the plastid. It is found in the chloroplast. It catalyses the reaction RNA(n) + a ribonucleoside 5'-triphosphate = RNA(n+1) + diphosphate. Its function is as follows. DNA-dependent RNA polymerase catalyzes the transcription of DNA into RNA using the four ribonucleoside triphosphates as substrates. This Pelargonium hortorum (Common geranium) protein is Putative DNA-directed RNA polymerase subunit alpha-like 3 (rpoAL3-A).